Reading from the N-terminus, the 183-residue chain is Senescence-associated protein DIN1 (183 aa).

The region spanning 83-183 is the Rhodanese domain; sequence AQAGYKHLDV…WTENELPVEE (101 aa).

Functionally, is thought to act during the early stages of leaf senescence. The chain is Senescence-associated protein DIN1 (DIN1) from Raphanus sativus (Radish).